The sequence spans 293 residues: 4-hydroxy-3-methylbut-2-enyl diphosphate reductase (293 aa).

Residue Cys12 participates in [4Fe-4S] cluster binding. Residues His40 and His74 each coordinate (2E)-4-hydroxy-3-methylbut-2-enyl diphosphate. Residues His40 and His74 each contribute to the dimethylallyl diphosphate site. Isopentenyl diphosphate is bound by residues His40 and His74. Residue Cys96 participates in [4Fe-4S] cluster binding. Residue His128 coordinates (2E)-4-hydroxy-3-methylbut-2-enyl diphosphate. His128 contributes to the dimethylallyl diphosphate binding site. His128 is a binding site for isopentenyl diphosphate. The active-site Proton donor is the Glu130. Thr166 is a binding site for (2E)-4-hydroxy-3-methylbut-2-enyl diphosphate. Cys202 provides a ligand contact to [4Fe-4S] cluster. Ser230, Ser231, Asn232, and Ser274 together coordinate (2E)-4-hydroxy-3-methylbut-2-enyl diphosphate. Positions 230, 231, 232, and 274 each coordinate dimethylallyl diphosphate. Ser230, Ser231, Asn232, and Ser274 together coordinate isopentenyl diphosphate.

It belongs to the IspH family. Requires [4Fe-4S] cluster as cofactor.

The enzyme catalyses isopentenyl diphosphate + 2 oxidized [2Fe-2S]-[ferredoxin] + H2O = (2E)-4-hydroxy-3-methylbut-2-enyl diphosphate + 2 reduced [2Fe-2S]-[ferredoxin] + 2 H(+). The catalysed reaction is dimethylallyl diphosphate + 2 oxidized [2Fe-2S]-[ferredoxin] + H2O = (2E)-4-hydroxy-3-methylbut-2-enyl diphosphate + 2 reduced [2Fe-2S]-[ferredoxin] + 2 H(+). Its pathway is isoprenoid biosynthesis; dimethylallyl diphosphate biosynthesis; dimethylallyl diphosphate from (2E)-4-hydroxy-3-methylbutenyl diphosphate: step 1/1. It functions in the pathway isoprenoid biosynthesis; isopentenyl diphosphate biosynthesis via DXP pathway; isopentenyl diphosphate from 1-deoxy-D-xylulose 5-phosphate: step 6/6. Catalyzes the conversion of 1-hydroxy-2-methyl-2-(E)-butenyl 4-diphosphate (HMBPP) into a mixture of isopentenyl diphosphate (IPP) and dimethylallyl diphosphate (DMAPP). Acts in the terminal step of the DOXP/MEP pathway for isoprenoid precursor biosynthesis. This is 4-hydroxy-3-methylbut-2-enyl diphosphate reductase from Cytophaga hutchinsonii (strain ATCC 33406 / DSM 1761 / CIP 103989 / NBRC 15051 / NCIMB 9469 / D465).